The sequence spans 324 residues: Ribosomal RNA small subunit methyltransferase H (324 aa).

S-adenosyl-L-methionine is bound by residues 47 to 49 (GGH), Asp-67, Leu-96, Asp-115, and Gln-122.

Belongs to the methyltransferase superfamily. RsmH family.

The protein localises to the cytoplasm. It catalyses the reaction cytidine(1402) in 16S rRNA + S-adenosyl-L-methionine = N(4)-methylcytidine(1402) in 16S rRNA + S-adenosyl-L-homocysteine + H(+). Functionally, specifically methylates the N4 position of cytidine in position 1402 (C1402) of 16S rRNA. This Halorhodospira halophila (strain DSM 244 / SL1) (Ectothiorhodospira halophila (strain DSM 244 / SL1)) protein is Ribosomal RNA small subunit methyltransferase H.